We begin with the raw amino-acid sequence, 246 residues long: MAFAVIRACSRVGRGGLYKRLGGPPRGTRRQRQRPRQGRQGASRSIAEQRSAAPRPPTGPPARYPSPAASARASEARRHPAADLDPPPGEPQAVASRGTPEPRPPPESPGAPPPPGSAPADGAMAAAKPGELMGICSSYQAVMPHFVCLTDEFPQPVRPAKLPKGKGRLRRPRQSRFKTQPVTFDEIQEVEEEGVSPMEEEKAKKSFLQSLECLRRSTQSLSLQREPLGSCKLRNSLDSSDSDSAL.

Disordered regions lie at residues 9–125 (CSRV…GAMA) and 155–203 (QPVR…EEKA). Residues 27-37 (GTRRQRQRPRQ) are compositionally biased toward basic residues. 2 stretches are compositionally biased toward pro residues: residues 54–64 (PRPPTGPPARY) and 101–117 (EPRP…PPGS). Residues 161-176 (KLPKGKGRLRRPRQSR) show a composition bias toward basic residues. Threonine 179 bears the Phosphothreonine mark. Serine 196, serine 210, and serine 220 each carry phosphoserine.

It localises to the cytoplasm. This is an uncharacterized protein from Mus musculus (Mouse).